The chain runs to 105 residues: Large ribosomal subunit protein uL24 (105 aa).

This sequence belongs to the universal ribosomal protein uL24 family. As to quaternary structure, part of the 50S ribosomal subunit.

In terms of biological role, one of two assembly initiator proteins, it binds directly to the 5'-end of the 23S rRNA, where it nucleates assembly of the 50S subunit. Its function is as follows. One of the proteins that surrounds the polypeptide exit tunnel on the outside of the subunit. The chain is Large ribosomal subunit protein uL24 from Xanthomonas campestris pv. campestris (strain 8004).